A 603-amino-acid chain; its full sequence is NADH-ubiquinone oxidoreductase chain 5 (603 aa).

15 helical membrane-spanning segments follow: residues 4–24, 35–55, 84–104, 121–141, 177–197, 213–233, 241–261, 273–293, 301–320, 325–347, 366–386, 413–433, 457–477, 480–500, and 583–603; these read ISTLTLASLIILTLPITTTLL, ITKTAVTYAFVISLIPTLLFV, FFSLTFMPIALFITWSIMEFS, LLLFLITMLILVSANNLLQLF, IGDMGFIMMMAWFIIHLNSWE, LLGLLLASTGKSAQFGLHPWL, TPVSALLHSSTMVMAGVFTLI, VQTSTLCLGAITTLFTAICAL, IIALSTSSQLGLMMVTIGIN, AFTHMCTHAFFKAMLFLSSGSII, MPITSTAIIIGSLALTGMPFL, LIAVSMTASYSTRIIFFALLG, LILGSIFMGFFISMNTIPHTT, MTMPPHLKFMALAVTLLGFTV, and LMKLYFLSFLLSITLGLLIAL.

This sequence belongs to the complex I subunit 5 family. In terms of assembly, core subunit of respiratory chain NADH dehydrogenase (Complex I) which is composed of 45 different subunits.

It is found in the mitochondrion inner membrane. It carries out the reaction a ubiquinone + NADH + 5 H(+)(in) = a ubiquinol + NAD(+) + 4 H(+)(out). In terms of biological role, core subunit of the mitochondrial membrane respiratory chain NADH dehydrogenase (Complex I) which catalyzes electron transfer from NADH through the respiratory chain, using ubiquinone as an electron acceptor. Essential for the catalytic activity and assembly of complex I. The sequence is that of NADH-ubiquinone oxidoreductase chain 5 (MT-ND5) from Mammuthus primigenius (Siberian woolly mammoth).